Consider the following 514-residue polypeptide: Probable endopolygalacturonase D (514 aa).

The N-terminal stretch at 1-16 (MKRCALLTPLLPLALA) is a signal peptide. The interval 134-166 (IKSSSPGPSSSFAAAATTEAPTSTRASPYTPYT) is disordered. Over residues 136–166 (SSSPGPSSSFAAAATTEAPTSTRASPYTPYT) the composition is skewed to low complexity. Cys173 and Cys188 are disulfide-bonded. N-linked (GlcNAc...) asparagine glycosylation is present at Asn240. PbH1 repeat units lie at residues 280–302 (VYNSVVANLNIQNWPVHCFDIEN), 303–341 (TESLTLTGITLDNSAGDEPNDSSDGDPAAHNSDGFDIKS), 342–363 (STDLILKDSNVYNQDDCVAITS), 364–384 (GTNITVDNMYCSGGHGLSIGS), 393–414 (VDGVVFSNSQVVNSQNGCRIKT), 422–444 (VSNIKYENISLSGISKYGIVVQQ), and 456–500 (SNGV…SITG). Residues 312 to 335 (TLDNSAGDEPNDSSDGDPAAHNSD) are disordered. Asn322 carries an N-linked (GlcNAc...) asparagine glycan. Residue Asp356 is the Proton donor of the active site. Cys358 and Cys374 are oxidised to a cystine. An N-linked (GlcNAc...) asparagine glycan is attached at Asn366. His378 is a catalytic residue. N-linked (GlcNAc...) asparagine glycosylation is present at Asn429. The cysteines at positions 483 and 488 are disulfide-linked. N-linked (GlcNAc...) asparagine glycosylation is present at Asn490. An intrachain disulfide couples Cys506 to Cys513.

It belongs to the glycosyl hydrolase 28 family.

It localises to the secreted. It catalyses the reaction (1,4-alpha-D-galacturonosyl)n+m + H2O = (1,4-alpha-D-galacturonosyl)n + (1,4-alpha-D-galacturonosyl)m.. Functionally, involved in maceration and soft-rotting of plant tissue. Hydrolyzes the 1,4-alpha glycosidic bonds of de-esterified pectate in the smooth region of the plant cell wall. This chain is Probable endopolygalacturonase D (pgaD), found in Emericella nidulans (strain FGSC A4 / ATCC 38163 / CBS 112.46 / NRRL 194 / M139) (Aspergillus nidulans).